The primary structure comprises 166 residues: tRNA-acetylating toxin (166 aa).

A disordered region spans residues 1 to 22; that stretch reads MSGYSAPRRISDADDVTSFSSG. The region spanning 1-162 is the N-acetyltransferase domain; the sequence is MSGYSAPRRI…LMLLMKDARA (162 aa). Tyr138 is a catalytic residue.

The protein belongs to the acetyltransferase family. GNAT subfamily. Homodimer, forms a complex with cognate antitoxin TacA.

The enzyme catalyses glycyl-tRNA(Gly) + acetyl-CoA = N-acetylglycyl-tRNA(Gly) + CoA + H(+). Its function is as follows. Toxic component of a type II toxin-antitoxin (TA) system. Overexpression of this gene alone in M.smegmatis inhibits growth, while overexpression of the tacA-tacT operon does not. Acetylates glycyl-tRNA(Gly) but not other tRNAs, blocks in vitro translation in the presence, but not absence, of acetyl-coenzyme A. Peptidyl-tRNA hydrolase (pth) counteracts the product of this enzyme in vitro. Neutralized by cognate antitoxin TacA. Does not seem to be active in laboratory growth conditions. TacA-TacT both represses and derepresses expression of its own operon. The sequence is that of tRNA-acetylating toxin from Mycobacterium tuberculosis (strain ATCC 25618 / H37Rv).